Here is a 204-residue protein sequence, read N- to C-terminus: 3,4-dihydroxy-2-butanone 4-phosphate synthase (204 aa).

Residue Glu-30 participates in Mg(2+) binding. Position 34 (Asp-34) interacts with D-ribulose 5-phosphate. Cys-59 bears the S-glutathionyl cysteine mark. Residues Thr-85 and Arg-142–Thr-146 contribute to the D-ribulose 5-phosphate site. His-145 contributes to the Mg(2+) binding site.

As to quaternary structure, homodimer. The cofactor is Mg(2+). It depends on Mn(2+) as a cofactor. In terms of processing, S-glutathionylation is reversible and dependent on a glutaredoxin.

It carries out the reaction D-ribulose 5-phosphate = (2S)-2-hydroxy-3-oxobutyl phosphate + formate + H(+). The protein operates within cofactor biosynthesis; riboflavin biosynthesis; 2-hydroxy-3-oxobutyl phosphate from D-ribulose 5-phosphate: step 1/1. Its function is as follows. Catalyzes the conversion of D-ribulose 5-phosphate to formate and 3,4-dihydroxy-2-butanone 4-phosphate. The chain is 3,4-dihydroxy-2-butanone 4-phosphate synthase (RIB3) from Candida albicans (strain SC5314 / ATCC MYA-2876) (Yeast).